Reading from the N-terminus, the 373-residue chain is Packaging protein 3 (373 aa).

Residues 1-32 form a disordered region; the sequence is MHPVLRQMRPQPRATTASAAVALSGSGEQEEP. An interaction with packaging protein 1 region spans residues 1 to 150; that stretch reads MHPVLRQMRP…VTEERNFQKS (150 aa). 2 positions are modified to phosphoserine; by host: serine 52 and serine 334.

Belongs to the adenoviridae packaging protein 3 family. As to quaternary structure, part of the genome packaging complex composed of packaging proteins 1, 2 and 3; this complex specifically binds to the packaging sequence on the left end of viral genomic DNA and performs packaging of the viral genome. Interacts with hexon-linking protein IIIa; this interaction is required to promote correct genome packaging. Cleaved at different sites by the viral protease during virion maturation.

The protein localises to the host nucleus. In terms of biological role, involved in viral genome packaging through its interaction with packaging proteins 1 and 2. After proteolytic cleavage by adenovirus protease, L1 52/55k protein is removed from the capsid during viral maturation. In Homo sapiens (Human), this protein is Packaging protein 3.